The following is a 4543-amino-acid chain: Low-density lipoprotein receptor-related protein 1 (4543 aa).

Positions methionine 1–arginine 21 are cleaved as a signal peptide. Over alanine 22 to glycine 4419 the chain is Extracellular. 2 consecutive LDL-receptor class A domains span residues lysine 27–glutamine 68 and serine 72–glutamate 112. 6 disulfide bridges follow: cysteine 29–cysteine 42, cysteine 36–cysteine 55, cysteine 49–cysteine 66, cysteine 74–cysteine 87, cysteine 81–cysteine 100, and cysteine 94–cysteine 110. An EGF-like 1 domain is found at glutamine 113–lysine 151. N-linked (GlcNAc...) asparagine glycosylation is present at asparagine 116. Intrachain disulfides connect cysteine 117–cysteine 126, cysteine 122–cysteine 135, cysteine 137–cysteine 150, cysteine 156–cysteine 166, cysteine 162–cysteine 175, and cysteine 177–cysteine 190. An N-linked (GlcNAc...) asparagine glycan is attached at asparagine 138. The EGF-like 2; calcium-binding domain maps to aspartate 152–lysine 191. 2 N-linked (GlcNAc...) asparagine glycosylation sites follow: asparagine 187 and asparagine 276. 3 LDL-receptor class B repeats span residues glycine 294–methionine 336, glycine 337–serine 380, and arginine 381–tyrosine 424. Asparagine 359 is a glycosylation site (N-linked (GlcNAc...) asparagine). The N-linked (GlcNAc...) asparagine glycan is linked to asparagine 448. In terms of domain architecture, EGF-like 3 spans arginine 476–lysine 522. Disulfide bonds link cysteine 480-cysteine 495, cysteine 491-cysteine 506, and cysteine 508-cysteine 521. LDL-receptor class B repeat units follow at residues glycine 573–glycine 615, asparagine 616–asparagine 661, glycine 662–alanine 712, and lysine 713–phenylalanine 756. A glycan (N-linked (GlcNAc...) asparagine) is linked at asparagine 731. The EGF-like 4 domain occupies glycine 801–glutamate 841. Intrachain disulfides connect cysteine 805–cysteine 816, cysteine 812–cysteine 825, cysteine 827–cysteine 840, cysteine 852–cysteine 864, cysteine 859–cysteine 877, cysteine 871–cysteine 888, cysteine 893–cysteine 905, cysteine 900–cysteine 918, cysteine 912–cysteine 929, cysteine 934–cysteine 946, cysteine 941–cysteine 959, cysteine 953–cysteine 969, cysteine 974–cysteine 987, cysteine 982–cysteine 1000, cysteine 994–cysteine 1009, cysteine 1013–cysteine 1025, cysteine 1020–cysteine 1038, cysteine 1032–cysteine 1049, cysteine 1060–cysteine 1073, cysteine 1067–cysteine 1086, cysteine 1080–cysteine 1095, cysteine 1102–cysteine 1116, cysteine 1110–cysteine 1129, cysteine 1123–cysteine 1138, cysteine 1143–cysteine 1157, cysteine 1150–cysteine 1170, cysteine 1164–cysteine 1180, cysteine 1183–cysteine 1194, cysteine 1190–cysteine 1204, cysteine 1206–cysteine 1219, cysteine 1225–cysteine 1235, cysteine 1231–cysteine 1244, and cysteine 1246–cysteine 1259. LDL-receptor class A domains lie at proline 850 to glutamine 890, histidine 891 to alanine 931, arginine 932 to tyrosine 971, proline 972 to histidine 1011, histidine 1011 to asparagine 1051, glycine 1058 to glycine 1097, histidine 1100 to serine 1140, and leucine 1141 to cysteine 1180. The Ca(2+) site is built by tryptophan 869, aspartate 872, aspartate 874, aspartate 876, aspartate 882, and glutamate 883. The N-linked (GlcNAc...) asparagine glycan is linked to asparagine 926. Ca(2+)-binding residues include tryptophan 1030, aspartate 1033, aspartate 1035, aspartate 1037, aspartate 1043, and glutamate 1044. Asparagine 1048 carries N-linked (GlcNAc...) asparagine glycosylation. The Ca(2+) site is built by tryptophan 1078, aspartate 1081, aspartate 1083, aspartate 1085, aspartate 1091, and glutamate 1092. N-linked (GlcNAc...) asparagine glycans are attached at residues asparagine 1152 and asparagine 1153. EGF-like domains lie at aspartate 1181 to glutamine 1220 and isoleucine 1221 to arginine 1260. Asparagine 1193 and asparagine 1216 each carry an N-linked (GlcNAc...) asparagine glycan. N-linked (GlcNAc...) asparagine glycosylation occurs at asparagine 1305. LDL-receptor class B repeat units lie at residues serine 1307–alanine 1353, glycine 1354–tyrosine 1396, glycine 1397–glutamate 1443, lysine 1444–glutamate 1488, and valine 1489–serine 1529. N-linked (GlcNAc...) asparagine glycosylation is present at asparagine 1509. Positions alanine 1534 to tyrosine 1577 constitute an EGF-like 7 domain. 3 cysteine pairs are disulfide-bonded: cysteine 1538–cysteine 1551, cysteine 1547–cysteine 1561, and cysteine 1563–cysteine 1576. N-linked (GlcNAc...) asparagine glycosylation is found at asparagine 1556, asparagine 1573, asparagine 1614, and asparagine 1643. LDL-receptor class B repeat units lie at residues glutamine 1625 to serine 1667, arginine 1668 to histidine 1711, glycine 1712 to glutamate 1751, and serine 1752 to lysine 1796. Asparagine 1721, asparagine 1731, asparagine 1761, and asparagine 1823 each carry an N-linked (GlcNAc...) asparagine glycan. Residues glycine 1842–glutamate 1883 enclose the EGF-like 8 domain. Intrachain disulfides connect cysteine 1846–cysteine 1857, cysteine 1853–cysteine 1867, and cysteine 1869–cysteine 1882. An N-linked (GlcNAc...) asparagine glycan is attached at asparagine 1929. LDL-receptor class B repeat units lie at residues aspartate 1930–alanine 1972, glycine 1973–lysine 2015, glycine 2016–aspartate 2059, and glycine 2060–tyrosine 2103. N-linked (GlcNAc...) asparagine glycans are attached at residues asparagine 1991 and asparagine 2044. N-linked (GlcNAc...) asparagine glycans are attached at residues asparagine 2113 and asparagine 2123. Positions glycine 2151–arginine 2191 constitute an EGF-like 9 domain. Intrachain disulfides connect cysteine 2155–cysteine 2166, cysteine 2162–cysteine 2176, and cysteine 2178–cysteine 2190. 5 LDL-receptor class B repeats span residues asparagine 2247–tryptophan 2288, aspartate 2289–glutamine 2337, asparagine 2338–alanine 2382, glutamate 2383–tyrosine 2425, and isoleucine 2426–aspartate 2467. N-linked (GlcNAc...) asparagine glycosylation is present at asparagine 2466. One can recognise an EGF-like 10 domain in the interval glutamate 2472 to lysine 2512. Intrachain disulfides connect cysteine 2476–cysteine 2487, cysteine 2483–cysteine 2497, and cysteine 2499–cysteine 2511. N-linked (GlcNAc...) asparagine glycosylation occurs at asparagine 2496. Asparagine 2515 carries an N-linked (GlcNAc...) asparagine glycan. LDL-receptor class A domains lie at serine 2516–serine 2557, arginine 2558–lysine 2596, threonine 2597–alanine 2635, threonine 2636–glycine 2684, proline 2688–lysine 2730, lysine 2730–leucine 2769, and threonine 2770–tyrosine 2812. Intrachain disulfides connect cysteine 2518–cysteine 2531, cysteine 2526–cysteine 2544, cysteine 2538–cysteine 2555, cysteine 2560–cysteine 2572, cysteine 2567–cysteine 2585, and cysteine 2579–cysteine 2594. The N-linked (GlcNAc...) asparagine glycan is linked to asparagine 2595. 15 cysteine pairs are disulfide-bonded: cysteine 2599–cysteine 2611, cysteine 2606–cysteine 2624, cysteine 2618–cysteine 2633, cysteine 2638–cysteine 2660, cysteine 2654–cysteine 2673, cysteine 2667–cysteine 2682, cysteine 2690–cysteine 2702, cysteine 2697–cysteine 2715, cysteine 2709–cysteine 2724, cysteine 2732–cysteine 2744, cysteine 2739–cysteine 2757, cysteine 2751–cysteine 2767, cysteine 2772–cysteine 2785, cysteine 2779–cysteine 2798, and cysteine 2792–cysteine 2810. N-linked (GlcNAc...) asparagine glycans are attached at residues asparagine 2614 and asparagine 2632. A glycan (N-linked (GlcNAc...) asparagine) is linked at asparagine 2813. 3 LDL-receptor class A domains span residues asparagine 2814–tyrosine 2853, proline 2854–serine 2897, and serine 2900–isoleucine 2938. 15 cysteine pairs are disulfide-bonded: cysteine 2816/cysteine 2828, cysteine 2823/cysteine 2841, cysteine 2835/cysteine 2851, cysteine 2856/cysteine 2868, cysteine 2863/cysteine 2882, cysteine 2876/cysteine 2895, cysteine 2902/cysteine 2914, cysteine 2909/cysteine 2927, cysteine 2921/cysteine 2936, cysteine 2941/cysteine 2953, cysteine 2949/cysteine 2962, cysteine 2964/cysteine 2977, cysteine 2983/cysteine 2993, cysteine 2989/cysteine 3002, and cysteine 3004/cysteine 3018. Asparagine 2903 carries an N-linked (GlcNAc...) asparagine glycan. The 40-residue stretch at asparagine 2939–isoleucine 2978 folds into the EGF-like 11 domain. The region spanning aspartate 2979–lysine 3019 is the EGF-like 12; calcium-binding domain. 2 N-linked (GlcNAc...) asparagine glycosylation sites follow: asparagine 3045 and asparagine 3086. 5 LDL-receptor class B repeats span residues glutamine 3066–glycine 3110, glycine 3111–asparagine 3153, glycine 3154–asparagine 3197, serine 3198–tyrosine 3240, and isoleucine 3241–tyrosine 3281. Asparagine 3176 carries N-linked (GlcNAc...) asparagine glycosylation. A glycan (N-linked (GlcNAc...) asparagine) is linked at asparagine 3261. The region spanning proline 3287–valine 3328 is the EGF-like 13 domain. Disulfide bonds link cysteine 3291-cysteine 3302, cysteine 3298-cysteine 3312, and cysteine 3314-cysteine 3327. LDL-receptor class A domains lie at serine 3329–glutamate 3368, phenylalanine 3369–isoleucine 3407, histidine 3408–glutamate 3447, valine 3448–glutamine 3488, methionine 3489–glutamate 3530, arginine 3531–proline 3569, arginine 3570–proline 3608, proline 3608–threonine 3646, arginine 3649–lysine 3689, phenylalanine 3690–serine 3730, and lysine 3736–histidine 3776. Residue asparagine 3330 is glycosylated (N-linked (GlcNAc...) asparagine). 38 disulfides stabilise this stretch: cysteine 3331–cysteine 3343, cysteine 3338–cysteine 3356, cysteine 3350–cysteine 3366, cysteine 3371–cysteine 3383, cysteine 3378–cysteine 3396, cysteine 3390–cysteine 3405, cysteine 3410–cysteine 3423, cysteine 3417–cysteine 3436, cysteine 3430–cysteine 3445, cysteine 3450–cysteine 3463, cysteine 3457–cysteine 3476, cysteine 3470–cysteine 3486, cysteine 3491–cysteine 3504, cysteine 3498–cysteine 3517, cysteine 3511–cysteine 3528, cysteine 3533–cysteine 3545, cysteine 3540–cysteine 3558, cysteine 3552–cysteine 3567, cysteine 3572–cysteine 3584, cysteine 3579–cysteine 3597, cysteine 3591–cysteine 3606, cysteine 3610–cysteine 3622, cysteine 3617–cysteine 3635, cysteine 3629–cysteine 3644, cysteine 3658–cysteine 3676, cysteine 3670–cysteine 3687, cysteine 3692–cysteine 3706, cysteine 3700–cysteine 3719, cysteine 3713–cysteine 3728, cysteine 3738–cysteine 3752, cysteine 3747–cysteine 3765, cysteine 3759–cysteine 3774, cysteine 3783–cysteine 3796, cysteine 3790–cysteine 3805, cysteine 3807–cysteine 3820, cysteine 3826–cysteine 3836, cysteine 3832–cysteine 3845, and cysteine 3847–cysteine 3858. Asparagine 3485 carries an N-linked (GlcNAc...) asparagine glycan. A glycan (N-linked (GlcNAc...) asparagine) is linked at asparagine 3659. EGF-like domains are found at residues lysine 3779–glutamine 3821 and aspartate 3822–lysine 3859. N-linked (GlcNAc...) asparagine glycosylation occurs at asparagine 3786. Asparagine 3837 is a glycosylation site (N-linked (GlcNAc...) asparagine). LDL-receptor class B repeat units lie at residues asparagine 3910–asparagine 3952, glycine 3969–arginine 4011, glycine 4012–asparagine 4055, and glutamate 4056–tyrosine 4100. The Recognition site for proteolytical processing motif lies at arginine 3939 to arginine 3942. N-linked (GlcNAc...) asparagine glycosylation is present at asparagine 3952. 2 N-linked (GlcNAc...) asparagine glycosylation sites follow: asparagine 4074 and asparagine 4124. 7 EGF-like domains span residues valine 4146–valine 4182, threonine 4195–glutamine 4231, glutamine 4231–aspartate 4267, aspartate 4267–glutamine 4303, glutamine 4303–glutamine 4339, glutamine 4339–leucine 4374, and serine 4372–glutamate 4409. 21 disulfides stabilise this stretch: cysteine 4150/cysteine 4159, cysteine 4155/cysteine 4168, cysteine 4170/cysteine 4181, cysteine 4199/cysteine 4209, cysteine 4203/cysteine 4219, cysteine 4221/cysteine 4230, cysteine 4235/cysteine 4245, cysteine 4239/cysteine 4255, cysteine 4257/cysteine 4266, cysteine 4271/cysteine 4281, cysteine 4275/cysteine 4291, cysteine 4293/cysteine 4302, cysteine 4307/cysteine 4317, cysteine 4311/cysteine 4327, cysteine 4329/cysteine 4338, cysteine 4343/cysteine 4351, cysteine 4346/cysteine 4362, cysteine 4364/cysteine 4373, cysteine 4376/cysteine 4386, cysteine 4380/cysteine 4397, and cysteine 4399/cysteine 4408. N-linked (GlcNAc...) asparagine glycosylation occurs at asparagine 4178. Asparagine 4278 carries an N-linked (GlcNAc...) asparagine glycan. Residues arginine 4420 to tyrosine 4443 form a helical membrane-spanning segment. Over lysine 4444–alanine 4543 the chain is Cytoplasmic. Residues phenylalanine 4501–tyrosine 4506 carry the NPXY motif motif. The tract at residues serine 4522–alanine 4543 is disordered. The span at threonine 4523–aspartate 4535 shows a compositional bias: basic and acidic residues.

It belongs to the LDLR family. As to quaternary structure, binds vitellogenin and LRPAP1 (alpha 2-macroglobulin). In terms of processing, cleaved into a 85 kDa membrane-spanning subunit (LRP-85) and a 515 kDa large extracellular domain (LRP-515) that remains non-covalently associated. In terms of tissue distribution, somatic.

It is found in the membrane. The protein resides in the coated pit. In terms of biological role, endocytic receptor involved in endocytosis and in phagocytosis of apoptotic cells. Involved in cellular lipid homeostasis. Involved in the plasma clearance of chylomicron remnants and activated LRPAP1 (alpha 2-macroglobulin), as well as the local metabolism of complexes between plasminogen activators and their endogenous inhibitors. Acts as an alpha-2-macroglobulin receptor. The chain is Low-density lipoprotein receptor-related protein 1 (LRP1) from Gallus gallus (Chicken).